Here is a 134-residue protein sequence, read N- to C-terminus: Syncollin (134 aa).

Positions M1 to G21 are cleaved as a signal peptide.

As to quaternary structure, monomer and homooligomer; most probably hexameric. Interacts with GP2. According to PubMed:10753942 interaction with syntaxins shown in PubMed:9244306 is physiologically questionable. Post-translationally, contains intrachain disulfide bonds. In terms of tissue distribution, specifically expressed in pancreas and also detected in secretory granules of parotid gland (at protein level). Expressed in pancreas, spleen, small intestine, lung and neutrophilic granulocytes (at protein level). Expressed by epithelial cells in duodenum and colon.

Its subcellular location is the zymogen granule membrane. It localises to the zymogen granule lumen. Its function is as follows. Functions in exocytosis in pancreatic acinar cells regulating the fusion of zymogen granules with each other. May have a pore-forming activity on membranes and regulate exocytosis in other exocrine tissues. This Rattus norvegicus (Rat) protein is Syncollin (Sycn).